A 463-amino-acid chain; its full sequence is MYGNYSHFMKFPTGFGGSPGHTGSTSMSPSVALPTGKPMDSHPSYTDTPVSAPRTLSAVGTPLNALGSPYRVITSAMGPPSGALAAPPGINLVVPPSSQLNVVNSVSSSEDIKPLPGLPGIGNMNYPSTSPGSLVKHICAICGDRSSGKHYGVYSCEGCKGFFKRTIRKDLIYTCRDNKDCLIDKRQRNRCQYCRYQKCLVMGMKREAVQEERQRSRERAESEAECASTGHEDMPVERILEAELAVEPKTESYGDMSVESSTNDPVTNICHAADKQLFTLVEWAKRIPHFSDLTLEDQVILLRAGWNELLIASFSHRSVSVQDGILLATGLHVHRSSAHSAGVGSIFDRVLTELVSKMKDMRMDKSELGCLRAIVLFNPDAKGLSNPSEVETLREKVYATLEAYTKQKYPEQPGRFAKLLLRLPALRSIGLKCLEHLFFFKLIGDTPIDTFLMEMLETPLQIT.

The interval Met-1–Ile-138 is modulating. Residues Gly-16–Pro-53 form a disordered region. NR C4-type zinc fingers lie at residues Cys-139–Cys-159 and Cys-175–Cys-199. Positions Cys-139 to Met-204 form a DNA-binding region, nuclear receptor. The segment at Lys-205–Gly-230 is hinge. Positions His-231–Pro-459 constitute an NR LBD domain.

It belongs to the nuclear hormone receptor family. NR2 subfamily. As to quaternary structure, homodimer. Heterodimer with a RAR molecule. Binds DNA preferentially as a RAR/RXR heterodimer. Interacts with RARA. Acetylated by EP300. In terms of tissue distribution, expressed in the liver, but not detected in the adrenal gland (at protein level). Restricted expression in adrenal gland, kidney, liver, brain and lungs. Strong expression in heart and muscles.

The protein resides in the nucleus. Its subcellular location is the cytoplasm. Its function is as follows. Receptor for retinoic acid. Retinoic acid receptors bind as heterodimers to their target response elements in response to their ligands, all-trans or 9-cis retinoic acid, and regulate gene expression in various biological processes. The RAR/RXR heterodimers bind to the retinoic acid response elements (RARE) composed of tandem 5'-AGGTCA-3' sites known as DR1-DR5. The high affinity ligand for RXRs is 9-cis retinoic acid. The polypeptide is Retinoic acid receptor RXR-gamma (Rxrg) (Rattus norvegicus (Rat)).